The sequence spans 316 residues: 4-hydroxy-3-methylbut-2-enyl diphosphate reductase (316 aa).

Cys12 is a binding site for [4Fe-4S] cluster. (2E)-4-hydroxy-3-methylbut-2-enyl diphosphate-binding residues include His41 and His74. Dimethylallyl diphosphate contacts are provided by His41 and His74. The isopentenyl diphosphate site is built by His41 and His74. Residue Cys96 participates in [4Fe-4S] cluster binding. His124 provides a ligand contact to (2E)-4-hydroxy-3-methylbut-2-enyl diphosphate. Dimethylallyl diphosphate is bound at residue His124. Residue His124 participates in isopentenyl diphosphate binding. Residue Glu126 is the Proton donor of the active site. A (2E)-4-hydroxy-3-methylbut-2-enyl diphosphate-binding site is contributed by Thr169. Residue Cys199 participates in [4Fe-4S] cluster binding. (2E)-4-hydroxy-3-methylbut-2-enyl diphosphate contacts are provided by Ser227, Ser228, Asn229, and Ser271. The dimethylallyl diphosphate site is built by Ser227, Ser228, Asn229, and Ser271. The isopentenyl diphosphate site is built by Ser227, Ser228, Asn229, and Ser271.

This sequence belongs to the IspH family. Requires [4Fe-4S] cluster as cofactor.

It carries out the reaction isopentenyl diphosphate + 2 oxidized [2Fe-2S]-[ferredoxin] + H2O = (2E)-4-hydroxy-3-methylbut-2-enyl diphosphate + 2 reduced [2Fe-2S]-[ferredoxin] + 2 H(+). The catalysed reaction is dimethylallyl diphosphate + 2 oxidized [2Fe-2S]-[ferredoxin] + H2O = (2E)-4-hydroxy-3-methylbut-2-enyl diphosphate + 2 reduced [2Fe-2S]-[ferredoxin] + 2 H(+). The protein operates within isoprenoid biosynthesis; dimethylallyl diphosphate biosynthesis; dimethylallyl diphosphate from (2E)-4-hydroxy-3-methylbutenyl diphosphate: step 1/1. It participates in isoprenoid biosynthesis; isopentenyl diphosphate biosynthesis via DXP pathway; isopentenyl diphosphate from 1-deoxy-D-xylulose 5-phosphate: step 6/6. Functionally, catalyzes the conversion of 1-hydroxy-2-methyl-2-(E)-butenyl 4-diphosphate (HMBPP) into a mixture of isopentenyl diphosphate (IPP) and dimethylallyl diphosphate (DMAPP). Acts in the terminal step of the DOXP/MEP pathway for isoprenoid precursor biosynthesis. The sequence is that of 4-hydroxy-3-methylbut-2-enyl diphosphate reductase from Stenotrophomonas maltophilia (strain R551-3).